We begin with the raw amino-acid sequence, 92 residues long: uncharacterized protein (92 aa).

In terms of domain architecture, HTH cro/C1-type spans 25 to 83; it reads LEEKLKQEKIDRKYLAQVTNIPYTTVSRIMRAEANREFNPEIDTILKIAKYFNCTMDEV. The H-T-H motif DNA-binding region spans 36-55; it reads RKYLAQVTNIPYTTVSRIMR.

This is an uncharacterized protein from Rickettsia prowazekii (strain Madrid E).